The primary structure comprises 341 residues: tRNA N6-adenosine threonylcarbamoyltransferase (341 aa).

His111 and His115 together coordinate Fe cation. Substrate contacts are provided by residues 133 to 137 (VVSGG), Asp166, Gly179, Asp183, and Asn271. Asp299 contributes to the Fe cation binding site.

It belongs to the KAE1 / TsaD family. Fe(2+) is required as a cofactor.

The protein resides in the cytoplasm. The enzyme catalyses L-threonylcarbamoyladenylate + adenosine(37) in tRNA = N(6)-L-threonylcarbamoyladenosine(37) in tRNA + AMP + H(+). Its function is as follows. Required for the formation of a threonylcarbamoyl group on adenosine at position 37 (t(6)A37) in tRNAs that read codons beginning with adenine. Is involved in the transfer of the threonylcarbamoyl moiety of threonylcarbamoyl-AMP (TC-AMP) to the N6 group of A37, together with TsaE and TsaB. TsaD likely plays a direct catalytic role in this reaction. The polypeptide is tRNA N6-adenosine threonylcarbamoyltransferase (Fusobacterium nucleatum subsp. nucleatum (strain ATCC 25586 / DSM 15643 / BCRC 10681 / CIP 101130 / JCM 8532 / KCTC 2640 / LMG 13131 / VPI 4355)).